A 50-amino-acid polypeptide reads, in one-letter code: Large ribosomal subunit protein bL33 (50 aa).

Belongs to the bacterial ribosomal protein bL33 family.

This Aquifex aeolicus (strain VF5) protein is Large ribosomal subunit protein bL33 (rpmG).